Here is a 209-residue protein sequence, read N- to C-terminus: MNLFQNAKFFTTINHLKDLPDTPLEIAFVGRSNAGKSSAINTLTNHVRLAYVSKTPGRTQHINFFELQNGNFMVDLPGYGYAQVPEAVRAHWVNLLGDYLQQRKQLIGLVLIMDARHPLKELDIRMLDFFHTTGRPVHILLSKADKLSKNEQIKTLSQVKKLLKPYSDRQNISVQLFSSLKKQGIDEANRTVGSWLDAADAAASSPEEN.

The EngB-type G domain maps to 22-198 (TPLEIAFVGR…NRTVGSWLDA (177 aa)). Mg(2+) is bound by residues S37 and T59.

It belongs to the TRAFAC class TrmE-Era-EngA-EngB-Septin-like GTPase superfamily. EngB GTPase family. Mg(2+) serves as cofactor.

Functionally, necessary for normal cell division and for the maintenance of normal septation. This chain is Probable GTP-binding protein EngB, found in Neisseria meningitidis serogroup B (strain ATCC BAA-335 / MC58).